Reading from the N-terminus, the 342-residue chain is Antihemorrhagic factor cHLP-B (342 aa).

An N-terminal signal peptide occupies residues 1–19; sequence MNSLVALVLLGQMIGSTLS. 2 consecutive Cystatin fetuin-A-type domains span residues 20-129 and 140-253; these read HHLQ…AKCH and RNCP…SDCV. 6 disulfide bridges follow: Cys28-Cys333, Cys85-Cys96, Cys110-Cys128, Cys142-Cys145, Cys204-Cys216, and Cys229-Cys252. Asn95 carries N-linked (GlcNAc...) asparagine glycosylation. Asn203 carries an N-linked (GlcNAc...) asparagine glycan. N-linked (GlcNAc...) asparagine glycosylation is found at Asn281 and Asn292.

This sequence belongs to the fetuin family. Homodimer. Expressed by the liver.

The protein localises to the secreted. Its function is as follows. Potent inhibitor of hemorrhagic activity but also proteolytic activities. Inhibition occurs by formation of a non-covalent complex between this protein and the proteinases at their metalloproteinase domains. The sequence is that of Antihemorrhagic factor cHLP-B from Gloydius brevicauda (Korean slamosa snake).